Here is a 247-residue protein sequence, read N- to C-terminus: tRNA (guanine-N(1)-)-methyltransferase (247 aa).

S-adenosyl-L-methionine-binding positions include Gly116 and 135-140; that span reads IGDYVL.

This sequence belongs to the RNA methyltransferase TrmD family. In terms of assembly, homodimer.

The protein resides in the cytoplasm. It carries out the reaction guanosine(37) in tRNA + S-adenosyl-L-methionine = N(1)-methylguanosine(37) in tRNA + S-adenosyl-L-homocysteine + H(+). Its function is as follows. Specifically methylates guanosine-37 in various tRNAs. The protein is tRNA (guanine-N(1)-)-methyltransferase of Symbiobacterium thermophilum (strain DSM 24528 / JCM 14929 / IAM 14863 / T).